We begin with the raw amino-acid sequence, 404 residues long: Probable tRNA sulfurtransferase (404 aa).

In terms of domain architecture, THUMP spans 60 to 165; sequence RSVIEALKPV…DEAAYLSHED (106 aa). ATP contacts are provided by residues 183 to 184, 208 to 209, R265, G287, and Q296; these read ML and HF.

It belongs to the ThiI family.

The protein resides in the cytoplasm. The enzyme catalyses [ThiI sulfur-carrier protein]-S-sulfanyl-L-cysteine + a uridine in tRNA + 2 reduced [2Fe-2S]-[ferredoxin] + ATP + H(+) = [ThiI sulfur-carrier protein]-L-cysteine + a 4-thiouridine in tRNA + 2 oxidized [2Fe-2S]-[ferredoxin] + AMP + diphosphate. The catalysed reaction is [ThiS sulfur-carrier protein]-C-terminal Gly-Gly-AMP + S-sulfanyl-L-cysteinyl-[cysteine desulfurase] + AH2 = [ThiS sulfur-carrier protein]-C-terminal-Gly-aminoethanethioate + L-cysteinyl-[cysteine desulfurase] + A + AMP + 2 H(+). Its pathway is cofactor biosynthesis; thiamine diphosphate biosynthesis. In terms of biological role, catalyzes the ATP-dependent transfer of a sulfur to tRNA to produce 4-thiouridine in position 8 of tRNAs, which functions as a near-UV photosensor. Also catalyzes the transfer of sulfur to the sulfur carrier protein ThiS, forming ThiS-thiocarboxylate. This is a step in the synthesis of thiazole, in the thiamine biosynthesis pathway. The sulfur is donated as persulfide by IscS. The polypeptide is Probable tRNA sulfurtransferase (Streptococcus equi subsp. zooepidemicus (strain H70)).